A 361-amino-acid polypeptide reads, in one-letter code: D-alanine--D-alanine ligase (361 aa).

The 206-residue stretch at 140–345 (KHLFAQAGLD…YAELIEKLVA (206 aa)) folds into the ATP-grasp domain. Position 173-228 (173-228 (EGELGYPCFVKPANLGSSVGISKCRSREELDQAFELAFQYDRKIVVEEGVIGREIE)) interacts with ATP. Residues aspartate 299, glutamate 312, and asparagine 314 each contribute to the Mg(2+) site.

Belongs to the D-alanine--D-alanine ligase family. Mg(2+) is required as a cofactor. The cofactor is Mn(2+).

The protein localises to the cytoplasm. It catalyses the reaction 2 D-alanine + ATP = D-alanyl-D-alanine + ADP + phosphate + H(+). It participates in cell wall biogenesis; peptidoglycan biosynthesis. Functionally, cell wall formation. In Bacillus licheniformis (strain ATCC 14580 / DSM 13 / JCM 2505 / CCUG 7422 / NBRC 12200 / NCIMB 9375 / NCTC 10341 / NRRL NRS-1264 / Gibson 46), this protein is D-alanine--D-alanine ligase.